Consider the following 317-residue polypeptide: uncharacterized protein (317 aa).

Positions 1-60 constitute an HTH lysR-type domain; it reads MKHELSSMKAFVILAESSSFNNAAKLLNITQPALTRRIKKMEEDLHVQLFERTTRKVTLT. The segment at residues 20–40 is a DNA-binding region (H-T-H motif); it reads FNNAAKLLNITQPALTRRIKK.

It belongs to the LysR transcriptional regulatory family.

This is an uncharacterized protein from Escherichia coli (strain K12).